Here is a 264-residue protein sequence, read N- to C-terminus: Cytosolic Fe-S cluster assembly factor Nubp2 homolog (264 aa).

14 to 21 (GKGGVGKS) contributes to the ATP binding site. Residues Cys-188 and Cys-191 each contribute to the [4Fe-4S] cluster site.

This sequence belongs to the Mrp/NBP35 ATP-binding proteins family. NUBP2/CFD1 subfamily. In terms of assembly, heterotetramer of 2 Nubp1 and 2 Nubp2 chains. Requires [4Fe-4S] cluster as cofactor.

The protein resides in the cytoplasm. Functionally, component of the cytosolic iron-sulfur (Fe/S) protein assembly (CIA) machinery. Required for maturation of extramitochondrial Fe-S proteins. The Nubp1-Nubp2 heterotetramer forms a Fe-S scaffold complex, mediating the de novo assembly of an Fe-S cluster and its transfer to target apoproteins. The polypeptide is Cytosolic Fe-S cluster assembly factor Nubp2 homolog (Drosophila grimshawi (Hawaiian fruit fly)).